The chain runs to 120 residues: Small ribosomal subunit protein bS16 (120 aa).

The segment covering 84-110 (KREVKSNPEKAKPGKRAQERAAEKAQK) has biased composition (basic and acidic residues). Residues 84-120 (KREVKSNPEKAKPGKRAQERAAEKAQKAADAAAATAE) form a disordered region. Residues 111-120 (AADAAAATAE) are compositionally biased toward low complexity.

The protein belongs to the bacterial ribosomal protein bS16 family.

The polypeptide is Small ribosomal subunit protein bS16 (Rhizobium rhizogenes (strain K84 / ATCC BAA-868) (Agrobacterium radiobacter)).